Reading from the N-terminus, the 603-residue chain is NADH-ubiquinone oxidoreductase chain 5 (603 aa).

The next 15 helical transmembrane spans lie at 4–24 (ISTLTLASLIILTLPITTTLL), 35–55 (ITKTAVTYAFVISLIPTLLFV), 84–104 (FFSLTFMPIALFITWSIMEFS), 121–141 (LLLFLITMLILVSANNLLQLF), 177–197 (IGDMGFIMMMAWFIIHLNSWE), 213–233 (LLGLLLASTGKSAQFGLHPWL), 241–261 (TPVSALLHSSTMVMAGVFTLI), 273–293 (VQTSTLCLGAITTLFTAICAL), 301–320 (IIALSTSSQLGLMMVTIGIN), 325–347 (AFTHMCTHAFFKAMLFLSSGSII), 366–386 (MPITSTAIIIGSLALTGMPFL), 413–433 (LIAVSMTASYSTRIIFFALLG), 457–477 (LILGSIFMGFFISMNTIPHTT), 480–500 (MTMPPHLKFMALAVTLLGFTV), and 583–603 (LMKLYFLSFLLSITLGLLIAL).

It belongs to the complex I subunit 5 family. In terms of assembly, core subunit of respiratory chain NADH dehydrogenase (Complex I) which is composed of 45 different subunits.

The protein resides in the mitochondrion inner membrane. The enzyme catalyses a ubiquinone + NADH + 5 H(+)(in) = a ubiquinol + NAD(+) + 4 H(+)(out). Functionally, core subunit of the mitochondrial membrane respiratory chain NADH dehydrogenase (Complex I) which catalyzes electron transfer from NADH through the respiratory chain, using ubiquinone as an electron acceptor. Essential for the catalytic activity and assembly of complex I. The sequence is that of NADH-ubiquinone oxidoreductase chain 5 (MT-ND5) from Mammuthus primigenius (Siberian woolly mammoth).